A 336-amino-acid polypeptide reads, in one-letter code: NADH-quinone oxidoreductase subunit H (336 aa).

8 helical membrane-spanning segments follow: residues 9–29 (LVWIVLLAIVLILCVAYLTYA), 77–97 (FLFAPVIIFVLALVGWAVIPF), 116–136 (LGVMYLLGVAALEVYGTIIAG), 156–176 (ISYEIVIAPVVMTVILLTGSL), 188–208 (LPYWVDILMLPMTFIFFVSIL), 236–256 (IPFALFFLGEYANMILSSSIM), 275–295 (IVPGFIWFILKIVFVLFCFLI), and 315–335 (VFLPVTLLWIVVIGGLVAFNI).

This sequence belongs to the complex I subunit 1 family. As to quaternary structure, NDH-1 is composed of 14 different subunits. Subunits NuoA, H, J, K, L, M, N constitute the membrane sector of the complex.

The protein resides in the cell inner membrane. The enzyme catalyses a quinone + NADH + 5 H(+)(in) = a quinol + NAD(+) + 4 H(+)(out). In terms of biological role, NDH-1 shuttles electrons from NADH, via FMN and iron-sulfur (Fe-S) centers, to quinones in the respiratory chain. The immediate electron acceptor for the enzyme in this species is believed to be ubiquinone. Couples the redox reaction to proton translocation (for every two electrons transferred, four hydrogen ions are translocated across the cytoplasmic membrane), and thus conserves the redox energy in a proton gradient. This subunit may bind ubiquinone. This is NADH-quinone oxidoreductase subunit H from Neorickettsia sennetsu (strain ATCC VR-367 / Miyayama) (Ehrlichia sennetsu).